The sequence spans 762 residues: Proline-rich receptor-like protein kinase PERK10 (762 aa).

A disordered region spans residues 1–322 (MTTPAQAPRE…PTPVTDNSSS (322 aa)). At 1 to 328 (MTTPAQAPRE…NSSSSGISIA (328 aa)) the chain is on the extracellular side. Positions 13 to 23 (SLSPSLASPPL) are enriched in low complexity. Asn-37 is a glycosylation site (N-linked (GlcNAc...) asparagine). A compositionally biased stretch (low complexity) spans 41-57 (PTREPTNGNPPETTNTP). Pro residues-rich tracts occupy residues 60–210 (SSPP…PSTP), 231–246 (PPPPGSKRPTPSPPSP), and 254–275 (HPSPPSPPEETLPPPKPSPDPL). The segment covering 276-305 (PSNSSSPPTLLPPSSVVSPPSPPRKSVSGP) has biased composition (low complexity). N-linked (GlcNAc...) asparagine glycans are attached at residues Asn-278 and Asn-319. Residues 329 to 349 (AVVGVSIGVALVLLTLIGVVV) form a helical membrane-spanning segment. Topologically, residues 350–762 (CCLKKRKKRL…NSYISKDENL (413 aa)) are cytoplasmic. Residues 370-410 (TPMESSSPRSDSALLKTQSSAPLVGNRSSNRTYLSQSEPGG) form a disordered region. Positions 372 to 407 (MESSSPRSDSALLKTQSSAPLVGNRSSNRTYLSQSE) are enriched in polar residues. Residues 430 to 706 (FSDENLLGEG…SQIVRAFDSL (277 aa)) enclose the Protein kinase domain. Residues 436–444 (LGEGGFGRV) and Lys-458 each bind ATP. The Proton acceptor role is filled by Asp-554.

This sequence belongs to the protein kinase superfamily. Ser/Thr protein kinase family. In terms of assembly, interacts with KIPK1 and KIPK2 (via its cytosolic domain). As to expression, mostly expressed in inflorescence bolts and flower buds, and, to a lower extent, in roots, seedlings, leaves and siliques.

It localises to the cell membrane. The catalysed reaction is L-seryl-[protein] + ATP = O-phospho-L-seryl-[protein] + ADP + H(+). It catalyses the reaction L-threonyl-[protein] + ATP = O-phospho-L-threonyl-[protein] + ADP + H(+). In terms of biological role, could be involved in the negative regulation of root growth. This chain is Proline-rich receptor-like protein kinase PERK10 (PERK10), found in Arabidopsis thaliana (Mouse-ear cress).